A 203-amino-acid polypeptide reads, in one-letter code: Protein ILM1 (203 aa).

Residues 1-3 (MAQ) are Cytoplasmic-facing. A helical membrane pass occupies residues 4 to 24 (ALNSTNIAFFRVAFLFTIAFF). The Lumenal portion of the chain corresponds to 25–58 (CLKNVNSILQNTYFIVLTQAMNLPQLTLSRYSGQ). Residues 59 to 79 (LGLFALLFTLNGVHDLIPLLE) traverse the membrane as a helical segment. Topologically, residues 80–92 (NNVKYFQSVVPVR) are cytoplasmic. The chain crosses the membrane as a helical span at residues 93 to 113 (LLIFFILTSISYLWESNFYVH). Position 114 (N114) is a topological domain, lumenal. The helical transmembrane segment at 115 to 135 (NSVFIYCFAEVWINFLLYNAI) threads the bilayer. Residues 136–203 (REEKNEEFKR…KGNDDSDAKK (68 aa)) are Cytoplasmic-facing. Over residues 175-187 (INDEENDDEDGKD) the composition is skewed to acidic residues. Positions 175 to 203 (INDEENDDEDGKDNDDNNEKGNDDSDAKK) are disordered. A compositionally biased stretch (basic and acidic residues) spans 188–203 (NDDNNEKGNDDSDAKK).

The protein belongs to the ILM1 family.

It localises to the endoplasmic reticulum membrane. The sequence is that of Protein ILM1 (ILM1) from Saccharomyces cerevisiae (strain ATCC 204508 / S288c) (Baker's yeast).